A 345-amino-acid chain; its full sequence is Nicotinate-nucleotide--dimethylbenzimidazole phosphoribosyltransferase (345 aa).

Glu-312 (proton acceptor) is an active-site residue.

This sequence belongs to the CobT family.

It carries out the reaction 5,6-dimethylbenzimidazole + nicotinate beta-D-ribonucleotide = alpha-ribazole 5'-phosphate + nicotinate + H(+). The protein operates within nucleoside biosynthesis; alpha-ribazole biosynthesis; alpha-ribazole from 5,6-dimethylbenzimidazole: step 1/2. In terms of biological role, catalyzes the synthesis of alpha-ribazole-5'-phosphate from nicotinate mononucleotide (NAMN) and 5,6-dimethylbenzimidazole (DMB). This Phocaeicola vulgatus (strain ATCC 8482 / DSM 1447 / JCM 5826 / CCUG 4940 / NBRC 14291 / NCTC 11154) (Bacteroides vulgatus) protein is Nicotinate-nucleotide--dimethylbenzimidazole phosphoribosyltransferase.